The chain runs to 337 residues: tRNA N6-adenosine threonylcarbamoyltransferase (337 aa).

His111 and His115 together coordinate Fe cation. Residues 134–138, Asp167, Gly180, and Asn272 contribute to the substrate site; that span reads LVSGG. Asp300 provides a ligand contact to Fe cation.

It belongs to the KAE1 / TsaD family. Requires Fe(2+) as cofactor.

The protein localises to the cytoplasm. It catalyses the reaction L-threonylcarbamoyladenylate + adenosine(37) in tRNA = N(6)-L-threonylcarbamoyladenosine(37) in tRNA + AMP + H(+). In terms of biological role, required for the formation of a threonylcarbamoyl group on adenosine at position 37 (t(6)A37) in tRNAs that read codons beginning with adenine. Is involved in the transfer of the threonylcarbamoyl moiety of threonylcarbamoyl-AMP (TC-AMP) to the N6 group of A37, together with TsaE and TsaB. TsaD likely plays a direct catalytic role in this reaction. In Salmonella newport (strain SL254), this protein is tRNA N6-adenosine threonylcarbamoyltransferase.